A 188-amino-acid polypeptide reads, in one-letter code: Elongation factor P (188 aa).

Belongs to the elongation factor P family.

The protein resides in the cytoplasm. Its pathway is protein biosynthesis; polypeptide chain elongation. In terms of biological role, involved in peptide bond synthesis. Stimulates efficient translation and peptide-bond synthesis on native or reconstituted 70S ribosomes in vitro. Probably functions indirectly by altering the affinity of the ribosome for aminoacyl-tRNA, thus increasing their reactivity as acceptors for peptidyl transferase. This is Elongation factor P from Methylorubrum extorquens (strain CM4 / NCIMB 13688) (Methylobacterium extorquens).